The chain runs to 327 residues: 7,8-didemethyl-8-hydroxy-5-deazariboflavin synthase (327 aa).

One can recognise a Radical SAM core domain in the interval 6-244 (ITFSRNVFLP…EEVAVQVAPN (239 aa)). The [4Fe-4S] cluster site is built by Cys-20, Cys-24, and Cys-27.

Belongs to the radical SAM superfamily. CofG family. In terms of assembly, consists of two subunits, CofG and CofH. It depends on [4Fe-4S] cluster as a cofactor.

The catalysed reaction is 5-amino-5-(4-hydroxybenzyl)-6-(D-ribitylimino)-5,6-dihydrouracil + S-adenosyl-L-methionine = 7,8-didemethyl-8-hydroxy-5-deazariboflavin + 5'-deoxyadenosine + L-methionine + NH4(+) + H(+). It participates in cofactor biosynthesis; coenzyme F0 biosynthesis. Catalyzes the radical-mediated synthesis of 7,8-didemethyl-8-hydroxy-5-deazariboflavin from 5-amino-5-(4-hydroxybenzyl)-6-(D-ribitylimino)-5,6-dihydrouracil. In Methanosphaerula palustris (strain ATCC BAA-1556 / DSM 19958 / E1-9c), this protein is 7,8-didemethyl-8-hydroxy-5-deazariboflavin synthase.